The sequence spans 94 residues: Large ribosomal subunit protein uL23 (94 aa).

Belongs to the universal ribosomal protein uL23 family. In terms of assembly, part of the 50S ribosomal subunit. Contacts protein L29, and trigger factor when it is bound to the ribosome.

In terms of biological role, one of the early assembly proteins it binds 23S rRNA. One of the proteins that surrounds the polypeptide exit tunnel on the outside of the ribosome. Forms the main docking site for trigger factor binding to the ribosome. This chain is Large ribosomal subunit protein uL23, found in Exiguobacterium sibiricum (strain DSM 17290 / CCUG 55495 / CIP 109462 / JCM 13490 / 255-15).